Reading from the N-terminus, the 382-residue chain is Gap junction alpha-1 protein (382 aa).

At 2-23 (GDWSALGKLLDKVQAYSTAGGK) the chain is on the cytoplasmic side. Ser5 carries the phosphoserine modification. Residues 24 to 44 (VWLSVLFIFRILLLGTAVESA) form a helical membrane-spanning segment. Topologically, residues 45-76 (WGDEQSAFRCNTQQPGCENVCYDKSFPISHVR) are extracellular. Intrachain disulfides connect Cys54–Cys192 and Cys187–Cys198. A helical transmembrane segment spans residues 77–97 (FWVLQIIFVSVPTLLYLAHVF). The Cytoplasmic segment spans residues 98–155 (YVMRKEEKLNKKEEELKVAQTDGVNVEMHLKQIEIKKFKYGIEEHGKVKMRGGLLRTY). Lys144 is covalently cross-linked (Glycyl lysine isopeptide (Lys-Gly) (interchain with G-Cter in SUMO)). A helical membrane pass occupies residues 156–176 (IISILFKSVFEVAFLLIQWYI). Topologically, residues 177–207 (YGFSLSAVYTCKRDPCPHQVDCFLSRPTEKT) are extracellular. Residues 208–228 (IFIIFMLVVSLVSLALNIIEL) traverse the membrane as a helical segment. At 229–382 (FYAFFKGVKD…SRPRPDDLEI (154 aa)) the chain is on the cytoplasmic side. A Glycyl lysine isopeptide (Lys-Gly) (interchain with G-Cter in SUMO) cross-link involves residue Lys237. Residues 244-382 (SDPYHATTGP…SRPRPDDLEI (139 aa)) form an interaction with NOV region. Tyr247 carries the phosphotyrosine modification. Ser255, Ser257, and Ser262 each carry phosphoserine. The interaction with UBQLN4 stretch occupies residues 264–382 (KYAYFNGCSS…SRPRPDDLEI (119 aa)). The residue at position 271 (Cys271) is an S-nitrosocysteine. Residue Thr275 is modified to Phosphothreonine. Phosphoserine occurs at positions 306 and 314. Over residues 317 to 332 (QNRMGQAGSTISNSHA) the composition is skewed to polar residues. The segment at 317–382 (QNRMGQAGST…SRPRPDDLEI (66 aa)) is disordered. Ser325 is subject to Phosphoserine; by CK1. Thr326 is subject to Phosphothreonine. Ser328 and Ser330 each carry phosphoserine; by CK1. Residues 342 to 351 (QNSKKLDAGH) are compositionally biased toward basic and acidic residues. A phosphoserine mark is found at Ser344 and Ser365. Positions 362 to 374 (RPSSRASSRASSR) are enriched in low complexity. At Ser368 the chain carries Phosphoserine; by PKC/PRKCG and PKC/PRKCD. Ser369 and Ser373 each carry phosphoserine.

The protein belongs to the connexin family. Alpha-type (group II) subfamily. A connexon is composed of a hexamer of connexins. Interacts with SGSM3. Interacts with RIC1/CIP150. Interacts with CNST and CSNK1D. Interacts (via C-terminus) with TJP1. Interacts (via C-terminus) with SRC (via SH3 domain). Interacts (not ubiquitinated) with UBQLN4 (via UBA domain). Interacts with NOV. Interacts with TMEM65. Interacts with ANK3/ANKG and PKP2. In terms of processing, phosphorylation at Ser-325, Ser-328 and Ser-330 by CK1 modulates gap junction assembly. Phosphorylated at Ser-368 by PRKCG; phosphorylation induces disassembly of gap junction plaques and inhibition of gap junction activity. Phosphorylation at Ser-368 by PRKCD triggers its internalization into small vesicles leading to proteasome-mediated degradation. Sumoylated with SUMO1, SUMO2 and SUMO3, which may regulate the level of functional Cx43 gap junctions at the plasma membrane. May be desumoylated by SENP1 or SENP2. Post-translationally, S-nitrosylation at Cys-271 is enriched at the muscle endothelial gap junction in arteries, it augments channel permeability and may regulate of smooth muscle cell to endothelial cell communication. In terms of processing, acetylated in the developing cortex; leading to delocalization from the cell membrane.

It localises to the cell membrane. The protein localises to the cell junction. The protein resides in the gap junction. Its subcellular location is the endoplasmic reticulum. Gap junction protein that acts as a regulator of bladder capacity. A gap junction consists of a cluster of closely packed pairs of transmembrane channels, the connexons, through which materials of low MW diffuse from one cell to a neighboring cell. May play a critical role in the physiology of hearing by participating in the recycling of potassium to the cochlear endolymph. Negative regulator of bladder functional capacity: acts by enhancing intercellular electrical and chemical transmission, thus sensitizing bladder muscles to cholinergic neural stimuli and causing them to contract. May play a role in cell growth inhibition through the regulation of NOV expression and localization. Plays an essential role in gap junction communication in the ventricles. The chain is Gap junction alpha-1 protein (GJA1) from Sus scrofa (Pig).